The following is a 296-amino-acid chain: tRNA dimethylallyltransferase (296 aa).

An ATP-binding site is contributed by 9–16; sequence GPTAVGKT. Residue 11–16 participates in substrate binding; the sequence is TAVGKT. The interaction with substrate tRNA stretch occupies residues 34–37; the sequence is DSRQ.

This sequence belongs to the IPP transferase family. In terms of assembly, monomer. The cofactor is Mg(2+).

The enzyme catalyses adenosine(37) in tRNA + dimethylallyl diphosphate = N(6)-dimethylallyladenosine(37) in tRNA + diphosphate. Its function is as follows. Catalyzes the transfer of a dimethylallyl group onto the adenine at position 37 in tRNAs that read codons beginning with uridine, leading to the formation of N6-(dimethylallyl)adenosine (i(6)A). The chain is tRNA dimethylallyltransferase from Chloroflexus aurantiacus (strain ATCC 29366 / DSM 635 / J-10-fl).